The sequence spans 185 residues: Elongation factor P (185 aa).

It belongs to the elongation factor P family.

It localises to the cytoplasm. Its pathway is protein biosynthesis; polypeptide chain elongation. In terms of biological role, involved in peptide bond synthesis. Stimulates efficient translation and peptide-bond synthesis on native or reconstituted 70S ribosomes in vitro. Probably functions indirectly by altering the affinity of the ribosome for aminoacyl-tRNA, thus increasing their reactivity as acceptors for peptidyl transferase. The chain is Elongation factor P from Kosmotoga olearia (strain ATCC BAA-1733 / DSM 21960 / TBF 19.5.1).